A 383-amino-acid chain; its full sequence is Probable L-tyrosine/L-aspartate decarboxylase (383 aa).

Lys227 carries the N6-(pyridoxal phosphate)lysine modification.

It belongs to the group II decarboxylase family. MfnA subfamily. It depends on pyridoxal 5'-phosphate as a cofactor.

It carries out the reaction L-tyrosine + H(+) = tyramine + CO2. The catalysed reaction is L-aspartate + H(+) = beta-alanine + CO2. It participates in cofactor biosynthesis; methanofuran biosynthesis. Its pathway is cofactor biosynthesis; coenzyme A biosynthesis. In terms of biological role, catalyzes the decarboxylation of L-tyrosine to produce tyramine for methanofuran biosynthesis. Can also catalyze the decarboxylation of L-aspartate to produce beta-alanine for coenzyme A (CoA) biosynthesis. The chain is Probable L-tyrosine/L-aspartate decarboxylase from Methanothrix thermoacetophila (strain DSM 6194 / JCM 14653 / NBRC 101360 / PT) (Methanosaeta thermophila).